The primary structure comprises 243 residues: Urease accessory protein UreF (243 aa).

Belongs to the UreF family. UreD, UreF and UreG form a complex that acts as a GTP-hydrolysis-dependent molecular chaperone, activating the urease apoprotein by helping to assemble the nickel containing metallocenter of UreC. The UreE protein probably delivers the nickel.

It is found in the cytoplasm. Required for maturation of urease via the functional incorporation of the urease nickel metallocenter. The protein is Urease accessory protein UreF of Rhodopseudomonas palustris (strain BisB5).